The chain runs to 239 residues: Tetraspanin-9 (239 aa).

The Cytoplasmic segment spans residues 1 to 13 (MARGCLCCLKYMM). The chain crosses the membrane as a helical span at residues 14–34 (FLFNLIFWLCGCGLLGVGIWL). At 35–55 (SVSQGNFATFSPSFPSLSAAN) the chain is on the extracellular side. A helical transmembrane segment spans residues 56–76 (LVIAIGTIVMVTGFLGCLGAI). The Cytoplasmic portion of the chain corresponds to 77 to 85 (KENKCLLLS). A helical membrane pass occupies residues 86 to 106 (FFIILLIILLAELILLILFFV). Over 107–203 (YMDKVNENAK…VKMWFDDNKH (97 aa)) the chain is Extracellular. A glycan (N-linked (GlcNAc...) asparagine) is linked at N180. Residues 204–224 (VLGTIGMCILIIQILGMAFSM) form a helical membrane-spanning segment. Topologically, residues 225 to 239 (TLFQQIHRTGKKYDA) are cytoplasmic.

The protein belongs to the tetraspanin (TM4SF) family.

The protein resides in the membrane. The chain is Tetraspanin-9 (tspan9) from Xenopus tropicalis (Western clawed frog).